Here is a 137-residue protein sequence, read N- to C-terminus: Cytochrome b5 (137 aa).

In terms of domain architecture, Cytochrome b5 heme-binding spans 6-82 (KKVYTLEEVA…MDEYYVGDID (77 aa)). Positions 41 and 65 each coordinate heme. Residues 108-128 (FIIKILQFLVPLAILGLAVAI) form a helical membrane-spanning segment.

Belongs to the cytochrome b5 family.

The protein localises to the endoplasmic reticulum membrane. It is found in the microsome membrane. Functionally, membrane bound hemoprotein which function as an electron carrier for several membrane bound oxygenases. This is Cytochrome b5 from Oryza sativa subsp. japonica (Rice).